Consider the following 171-residue polypeptide: UPF0398 protein Sez_1569 (171 aa).

The protein belongs to the UPF0398 family.

In Streptococcus equi subsp. zooepidemicus (strain MGCS10565), this protein is UPF0398 protein Sez_1569.